Here is a 79-residue protein sequence, read N- to C-terminus: Conotoxin ArMSGL-0122 (79 aa).

The signal sequence occupies residues 1–20; the sequence is MSRLGIMVLTLLLLVFIVTS. A propeptide spanning residues 21–44 is cleaved from the precursor; the sequence is HQDAGEKQATQRAAINFRWKRSLT. 3 cysteine pairs are disulfide-bonded: Cys-52/Cys-64, Cys-56/Cys-73, and Cys-63/Cys-77. The residue at position 78 (Leu-78) is a Leucine amide.

It belongs to the conotoxin O3 superfamily. In terms of tissue distribution, expressed by the venom duct.

The protein resides in the secreted. This is Conotoxin ArMSGL-0122 from Conus arenatus (Sand-dusted cone).